Consider the following 194-residue polypeptide: Acireductone dioxygenase 1 (194 aa).

Positions 1–21 (MEAWYMDDSADDQRKPHHRSP) are disordered. Fe(2+) contacts are provided by histidine 87, histidine 89, glutamate 93, and histidine 132. The Ni(2+) site is built by histidine 87, histidine 89, glutamate 93, and histidine 132.

Belongs to the acireductone dioxygenase (ARD) family. Fe(2+) is required as a cofactor. The cofactor is Ni(2+).

The protein resides in the cytoplasm. It is found in the nucleus. It catalyses the reaction 1,2-dihydroxy-5-(methylsulfanyl)pent-1-en-3-one + O2 = 4-methylsulfanyl-2-oxobutanoate + formate + 2 H(+). The enzyme catalyses 1,2-dihydroxy-5-(methylsulfanyl)pent-1-en-3-one + O2 = 3-(methylsulfanyl)propanoate + CO + formate + 2 H(+). The protein operates within amino-acid biosynthesis; L-methionine biosynthesis via salvage pathway; L-methionine from S-methyl-5-thio-alpha-D-ribose 1-phosphate: step 5/6. Its function is as follows. Catalyzes 2 different reactions between oxygen and the acireductone 1,2-dihydroxy-3-keto-5-methylthiopentene (DHK-MTPene) depending upon the metal bound in the active site. Fe-containing acireductone dioxygenase (Fe-ARD) produces formate and 2-keto-4-methylthiobutyrate (KMTB), the alpha-ketoacid precursor of methionine in the methionine recycle pathway. Ni-containing acireductone dioxygenase (Ni-ARD) produces methylthiopropionate, carbon monoxide and formate, and does not lie on the methionine recycle pathway. The protein is Acireductone dioxygenase 1 of Physcomitrium patens (Spreading-leaved earth moss).